The sequence spans 380 residues: Flap endonuclease 1 (380 aa).

The segment at 1 to 104 (MGIHGLAKLI…AELEKRGERR (104 aa)) is N-domain. A Mg(2+)-binding site is contributed by aspartate 34. DNA contacts are provided by arginine 47 and arginine 70. 5 residues coordinate Mg(2+): aspartate 86, glutamate 158, glutamate 160, aspartate 179, and aspartate 181. The interval 122–253 (NIDKFSKRLV…KRAIDLIRQH (132 aa)) is I-domain. Glutamate 158 is a binding site for DNA. DNA is bound by residues glycine 231 and aspartate 233. Aspartate 233 contributes to the Mg(2+) binding site. The tract at residues 327 to 380 (KMMKSRQGSTQGRLDSFFSVTGSLSSKRKEPETKGSAKKKQKTGATPGKFRKGK) is disordered. Polar residues predominate over residues 332-351 (RQGSTQGRLDSFFSVTGSLS). The segment at 336–344 (TQGRLDSFF) is interaction with PCNA.

The protein belongs to the XPG/RAD2 endonuclease family. FEN1 subfamily. As to quaternary structure, interacts with PCNA. Three molecules of fen1 bind to one PCNA trimer with each molecule binding to one PCNA monomer. PCNA stimulates the nuclease activity without altering cleavage specificity. The cofactor is Mg(2+). Phosphorylated. Phosphorylation upon DNA damage induces relocalization to the nuclear plasma.

Its subcellular location is the nucleus. The protein localises to the nucleolus. It localises to the nucleoplasm. It is found in the mitochondrion. Structure-specific nuclease with 5'-flap endonuclease and 5'-3' exonuclease activities involved in DNA replication and repair. During DNA replication, cleaves the 5'-overhanging flap structure that is generated by displacement synthesis when DNA polymerase encounters the 5'-end of a downstream Okazaki fragment. It enters the flap from the 5'-end and then tracks to cleave the flap base, leaving a nick for ligation. Also involved in the long patch base excision repair (LP-BER) pathway, by cleaving within the apurinic/apyrimidinic (AP) site-terminated flap. Acts as a genome stabilization factor that prevents flaps from equilibrating into structures that lead to duplications and deletions. Also possesses 5'-3' exonuclease activity on nicked or gapped double-stranded DNA, and exhibits RNase H activity. Also involved in replication and repair of rDNA and in repairing mitochondrial DNA. This Xiphophorus maculatus (Southern platyfish) protein is Flap endonuclease 1 (fen1).